Here is a 365-residue protein sequence, read N- to C-terminus: Outer membrane protein assembly factor BamC (365 aa).

An N-terminal signal peptide occupies residues 1-19; sequence MKHNRLAIAALAPVLILVG. Cys-20 carries N-palmitoyl cysteine lipidation. Residue Cys-20 is the site of S-diacylglycerol cysteine attachment.

It belongs to the BamC family. As to quaternary structure, part of the Bam complex.

Its subcellular location is the cell outer membrane. Its function is as follows. Part of the outer membrane protein assembly complex, which is involved in assembly and insertion of beta-barrel proteins into the outer membrane. The sequence is that of Outer membrane protein assembly factor BamC from Ferrimonas balearica (strain DSM 9799 / CCM 4581 / KCTC 23876 / PAT).